We begin with the raw amino-acid sequence, 152 residues long: Ribosome maturation factor RimP (152 aa).

The protein belongs to the RimP family.

Its subcellular location is the cytoplasm. Functionally, required for maturation of 30S ribosomal subunits. The protein is Ribosome maturation factor RimP of Teredinibacter turnerae (strain ATCC 39867 / T7901).